Here is a 792-residue protein sequence, read N- to C-terminus: Kinesin-like protein KIFC2 (792 aa).

2 disordered regions span residues Ala22–Pro45 and Gln142–Gln184. A compositionally biased stretch (polar residues) spans Gln142–Thr169. Residues Leu186–Cys347 adopt a coiled-coil conformation. In terms of domain architecture, Kinesin motor spans Asn409–Val732. Residue Gly486 to Thr493 coordinates ATP. A disordered region spans residues Leu734 to Pro792. Over residues Arg744–Pro764 the composition is skewed to low complexity. Residues Thr765–Thr774 show a composition bias toward pro residues.

It belongs to the TRAFAC class myosin-kinesin ATPase superfamily. Kinesin family. Present in axons and dendrites of neurons in the central and peripheral nervous systems.

It is found in the cytoplasm. The protein localises to the cytoskeleton. Functionally, may play a role in microtubule-dependent retrograde axonal transport. May function as the motor for the transport of multivesicular body (MVB)-like organelles in dendrites. This chain is Kinesin-like protein KIFC2 (Kifc2), found in Mus musculus (Mouse).